The chain runs to 341 residues: Protein-glutamate methylesterase/protein-glutamine glutaminase 2 (341 aa).

The 114-residue stretch at 7-120 folds into the Response regulatory domain; it reads KTLIVDDSLL…NRDLDSFFSE (114 aa). A 4-aspartylphosphate modification is found at D58. Residues 155–341 enclose the CheB-type methylesterase domain; sequence VIAIGASTGG…QALYKLINQL (187 aa). Residues S161, H187, and D283 contribute to the active site.

This sequence belongs to the CheB family. Post-translationally, phosphorylated by CheA. Phosphorylation of the N-terminal regulatory domain activates the methylesterase activity.

Its subcellular location is the cytoplasm. The enzyme catalyses [protein]-L-glutamate 5-O-methyl ester + H2O = L-glutamyl-[protein] + methanol + H(+). It carries out the reaction L-glutaminyl-[protein] + H2O = L-glutamyl-[protein] + NH4(+). In terms of biological role, involved in chemotaxis. Part of a chemotaxis signal transduction system that modulates chemotaxis in response to various stimuli. Catalyzes the demethylation of specific methylglutamate residues introduced into the chemoreceptors (methyl-accepting chemotaxis proteins or MCP) by CheR. Also mediates the irreversible deamidation of specific glutamine residues to glutamic acid. The sequence is that of Protein-glutamate methylesterase/protein-glutamine glutaminase 2 from Syntrophomonas wolfei subsp. wolfei (strain DSM 2245B / Goettingen).